The chain runs to 146 residues: Large ribosomal subunit protein mL41 (146 aa).

The N-terminal 16 residues, 1–16, are a transit peptide targeting the mitochondrion; the sequence is MKGSPISQFSKTSINA.

The protein belongs to the mitochondrion-specific ribosomal protein mL41 family. In terms of assembly, component of the mitochondrial large ribosomal subunit (mt-LSU). Mature yeast 74S mitochondrial ribosomes consist of a small (37S) and a large (54S) subunit. The 37S small subunit contains a 15S ribosomal RNA (15S mt-rRNA) and 34 different proteins. The 54S large subunit contains a 21S rRNA (21S mt-rRNA) and 46 different proteins.

The protein resides in the mitochondrion. In terms of biological role, component of the mitochondrial ribosome (mitoribosome), a dedicated translation machinery responsible for the synthesis of mitochondrial genome-encoded proteins, including at least some of the essential transmembrane subunits of the mitochondrial respiratory chain. The mitoribosomes are attached to the mitochondrial inner membrane and translation products are cotranslationally integrated into the membrane. The protein is Large ribosomal subunit protein mL41 (MRPL27) of Saccharomyces cerevisiae (strain ATCC 204508 / S288c) (Baker's yeast).